The sequence spans 1547 residues: Mediator of RNA polymerase II transcription subunit 12 (1547 aa).

2 disordered regions span residues 1 to 63 (MTSR…RPHI) and 1356 to 1509 (PVIP…QQRD). Over residues 1357-1369 (VIPPLEPPQPPNP) the composition is skewed to pro residues. Polar residues predominate over residues 1379–1390 (YQSPQMTSNTAA). Composition is skewed to low complexity over residues 1398–1413 (QQQQ…QQTQ) and 1446–1468 (LSPL…RASQ). Composition is skewed to polar residues over residues 1469–1480 (PSPIHSQRPTSV) and 1499–1509 (AHTSYVNQQRD).

This sequence belongs to the Mediator complex subunit 12 family. As to quaternary structure, component of the SRB8-11 complex, which itself associates with the Mediator complex.

It localises to the nucleus. In terms of biological role, component of the SRB8-11 complex. The SRB8-11 complex is a regulatory module of the Mediator complex which is itself involved in regulation of basal and activated RNA polymerase II-dependent transcription. The SRB8-11 complex may be involved in the transcriptional repression of a subset of genes regulated by Mediator. It may inhibit the association of the Mediator complex with RNA polymerase II to form the holoenzyme complex. The chain is Mediator of RNA polymerase II transcription subunit 12 (SRB8) from Phaeosphaeria nodorum (strain SN15 / ATCC MYA-4574 / FGSC 10173) (Glume blotch fungus).